We begin with the raw amino-acid sequence, 92 residues long: Islet amyloid polypeptide (92 aa).

Residues 1 to 22 form the signal peptide; that stretch reads MCLLRLPVTLLVLCVALNELKA. Residues 23–34 constitute a propeptide that is removed on maturation; it reads TSIASDTGHQVG. C38 and C43 form a disulfide bridge. Y73 is modified (tyrosine amide). Residues 77–92 constitute a propeptide that is removed on maturation; that stretch reads NAPQISDRELLHYLPL.

This sequence belongs to the calcitonin family. Can form homodimers. Interacts with IDE and INS. Interaction with INS inhibits homodimerization and fibril formation.

Its subcellular location is the secreted. Its function is as follows. Amylin/IAPP is a glucoregulatory peptide hormone that plays an important role in the regulation of energy homeostasis. Selectively inhibits insulin-stimulated glucose utilization and glycogen deposition in muscle, while not affecting adipocyte glucose metabolism. IAPP function is mediated by the CALCR-RAMPs (AMYRs) receptor complexes. Amylin can also bind CALCR receptor in the absence of RAMPs, although it is more selective for AMYRs. This is Islet amyloid polypeptide (IAPP) from Cavia porcellus (Guinea pig).